A 272-amino-acid polypeptide reads, in one-letter code: Ethanolamine ammonia-lyase small subunit (272 aa).

Positions 161, 182, and 211 each coordinate adenosylcob(III)alamin.

It belongs to the EutC family. In terms of assembly, the basic unit is a heterodimer which dimerizes to form tetramers. The heterotetramers trimerize; 6 large subunits form a core ring with 6 small subunits projecting outwards. It depends on adenosylcob(III)alamin as a cofactor.

The protein resides in the bacterial microcompartment. The enzyme catalyses ethanolamine = acetaldehyde + NH4(+). It participates in amine and polyamine degradation; ethanolamine degradation. Catalyzes the deamination of various vicinal amino-alcohols to oxo compounds. Allows this organism to utilize ethanolamine as the sole source of nitrogen and carbon in the presence of external vitamin B12. This Pseudomonas putida (strain ATCC 47054 / DSM 6125 / CFBP 8728 / NCIMB 11950 / KT2440) protein is Ethanolamine ammonia-lyase small subunit.